The sequence spans 601 residues: Polypeptide N-acetylgalactosaminyltransferase 11 (601 aa).

Residues 1-7 (MGSAALR) are Cytoplasmic-facing. Residues 8-28 (CFCYGCLFTSVTWTLLLFIYF) form a helical; Signal-anchor for type II membrane protein membrane-spanning segment. Asn-29 and Asn-202 each carry an N-linked (GlcNAc...) asparagine glycan. The Lumenal segment spans residues 29–601 (NFSEESQGFR…SPSQQWHLEN (573 aa)). The interval 143–254 (LPMASIVICF…EMWLQPLLAP (112 aa)) is catalytic subdomain A. The segment at 312 to 374 (PFRSPTMAGG…PCSRVGHIFR (63 aa)) is catalytic subdomain B. Positions 469-600 (RPKILQRGRL…GSPSQQWHLE (132 aa)) constitute a Ricin B-type lectin domain. An intrachain disulfide couples Cys-486 to Cys-505. A glycan (N-linked (GlcNAc...) asparagine) is linked at Asn-508. Intrachain disulfides connect Cys-529–Cys-546 and Cys-571–Cys-589.

The protein belongs to the glycosyltransferase 2 family. GalNAc-T subfamily. As to quaternary structure, interacts with notch1. Mn(2+) is required as a cofactor. Ca(2+) serves as cofactor.

The protein resides in the golgi apparatus membrane. The catalysed reaction is L-seryl-[protein] + UDP-N-acetyl-alpha-D-galactosamine = a 3-O-[N-acetyl-alpha-D-galactosaminyl]-L-seryl-[protein] + UDP + H(+). The enzyme catalyses L-threonyl-[protein] + UDP-N-acetyl-alpha-D-galactosamine = a 3-O-[N-acetyl-alpha-D-galactosaminyl]-L-threonyl-[protein] + UDP + H(+). The protein operates within protein modification; protein glycosylation. Its function is as follows. Polypeptide N-acetylgalactosaminyltransferase that catalyzes the initiation of protein O-linked glycosylation and is involved in left/right asymmetry by mediating O-glycosylation of NOTCH1. O-glycosylation of NOTCH1 promotes activation of NOTCH1, modulating the balance between motile and immotile (sensory) cilia at the left-right organiser (LRO). Polypeptide N-acetylgalactosaminyltransferases catalyze the transfer of an N-acetyl-D-galactosamine residue to a serine or threonine residue on the protein receptor. In Xenopus tropicalis (Western clawed frog), this protein is Polypeptide N-acetylgalactosaminyltransferase 11 (galnt11).